The following is a 188-amino-acid chain: 3-deoxy-D-manno-octulosonate 8-phosphate phosphatase KdsC (188 aa).

The Mg(2+) site is built by D32 and D34. Substrate-binding positions include D34, 55 to 59, R63, R78, R86, and K102; that span reads NVRDG. Residue D125 participates in Mg(2+) binding.

Belongs to the KdsC family. As to quaternary structure, homotetramer. Requires Mg(2+) as cofactor.

The catalysed reaction is 3-deoxy-alpha-D-manno-2-octulosonate-8-phosphate + H2O = 3-deoxy-alpha-D-manno-oct-2-ulosonate + phosphate. It functions in the pathway carbohydrate biosynthesis; 3-deoxy-D-manno-octulosonate biosynthesis; 3-deoxy-D-manno-octulosonate from D-ribulose 5-phosphate: step 3/3. It participates in bacterial outer membrane biogenesis; lipopolysaccharide biosynthesis. Its function is as follows. Catalyzes the hydrolysis of 3-deoxy-D-manno-octulosonate 8-phosphate (KDO 8-P) to 3-deoxy-D-manno-octulosonate (KDO) and inorganic phosphate. This chain is 3-deoxy-D-manno-octulosonate 8-phosphate phosphatase KdsC, found in Escherichia coli (strain K12).